The sequence spans 284 residues: Ubiquitin thioesterase otubain-like (284 aa).

Residues 77-274 (GEIRYIRGDG…PGHYDVIYKK (198 aa)) enclose the OTU domain. Residue Asp-85 is part of the active site. The active-site Nucleophile is the Cys-88. Residue Ile-176 coordinates substrate. Residues His-245 and His-267 contribute to the active site.

It belongs to the peptidase C65 family.

It catalyses the reaction Thiol-dependent hydrolysis of ester, thioester, amide, peptide and isopeptide bonds formed by the C-terminal Gly of ubiquitin (a 76-residue protein attached to proteins as an intracellular targeting signal).. Its function is as follows. Hydrolase that can remove conjugated ubiquitin from proteins and plays an important regulatory role at the level of protein turnover by preventing degradation. Specifically cleaves 'Lys-48'-linked polyubiquitin. This chain is Ubiquitin thioesterase otubain-like (otub-1), found in Caenorhabditis elegans.